The primary structure comprises 31 residues: Kallikrein-1 (31 aa).

The Peptidase S1 domain maps to 1–31 (VIGGQECARDSHPWQAAVYHFSDIECGGVLV).

Belongs to the peptidase S1 family. Kallikrein subfamily.

The catalysed reaction is Preferential cleavage of Arg-|-Xaa bonds in small molecule substrates. Highly selective action to release kallidin (lysyl-bradykinin) from kininogen involves hydrolysis of Met-|-Xaa or Leu-|-Xaa.. Its function is as follows. Glandular kallikreins cleave Met-Lys and Arg-Ser bonds in kininogen to release Lys-bradykinin. The sequence is that of Kallikrein-1 from Cavia porcellus (Guinea pig).